Consider the following 425-residue polypeptide: Beta-1,4-galactosyltransferase galt-1 (425 aa).

At 1-8 the chain is on the cytoplasmic side; that stretch reads MPRITASK. The helical; Signal-anchor for type II membrane protein transmembrane segment at 9-29 threads the bilayer; the sequence is IVLLIALSFCITVIYHFPIAT. Topologically, residues 30–425 are lumenal; the sequence is RSSKEYDEYG…FDSVVGLLDL (396 aa). Residues asparagine 109 and asparagine 152 are each glycosylated (N-linked (GlcNAc...) asparagine). The region spanning 189-394 is the GT92 domain; the sequence is KMSICVPALF…LLRVYHYKDK (206 aa).

Belongs to the glycosyltransferase 92 family. Mn(2+) serves as cofactor. Post-translationally, N-glycosylated. In terms of tissue distribution, expressed in intestine and coelomocytes.

The protein resides in the golgi apparatus. It is found in the golgi stack membrane. With respect to regulation, inhibited by EDTA, Cu(2+) and Zn(2+). Functionally, catalyzes the transfer of beta-galactose from UDP-galactose to position 4 of alpha-1,6-linked fucose at the reducing end GlcNAc in N-glycan cores. Involved in susceptibility to the nematotoxic C.cinerea galectin Cgl2, likely by contributing to the synthesis of core alpha-1,6-fucosylated N-glycans to which Cgl2 binds. In Caenorhabditis elegans, this protein is Beta-1,4-galactosyltransferase galt-1.